Reading from the N-terminus, the 785-residue chain is Probable serine protease Ga0098714_109514 (785 aa).

Basic and acidic residues-rich tracts occupy residues 470 to 481 (LDHGKNGREGGR) and 491 to 501 (DGPEHPNHYAD). 2 disordered regions span residues 470 to 503 (LDHGKNGREGGRDVSAGPHGSDGPEHPNHYADID) and 608 to 629 (DGDASRTVTRHHPRTGEDEEVS).

Belongs to the peptidase S1 family.

In terms of biological role, probably a dedicated protease for substrate gasdermin bGSDM; cleaves the bGSDM precursor, releasing the pore-forming moiety, which integrates into the membrane and triggers cell death. Involved in defense against bacteriophages. Expression of gasdermin bGSDM and this neighboring protease is toxic in E.coli on solid medium. In Bradyrhizobium tropiciagri, this protein is Probable serine protease Ga0098714_109514.